Here is a 344-residue protein sequence, read N- to C-terminus: Adenosine deaminase (344 aa).

2 residues coordinate Zn(2+): His14 and His16. Substrate-binding residues include His16, Asp18, and Gly177. A Zn(2+)-binding site is contributed by His204. Glu207 (proton donor) is an active-site residue. Position 284 (Asp284) interacts with Zn(2+).

It belongs to the metallo-dependent hydrolases superfamily. Adenosine and AMP deaminases family. Adenosine deaminase subfamily. Zn(2+) is required as a cofactor.

The enzyme catalyses adenosine + H2O + H(+) = inosine + NH4(+). It carries out the reaction 2'-deoxyadenosine + H2O + H(+) = 2'-deoxyinosine + NH4(+). Catalyzes the hydrolytic deamination of adenosine and 2-deoxyadenosine. The sequence is that of Adenosine deaminase from Haemophilus ducreyi (strain 35000HP / ATCC 700724).